A 325-amino-acid polypeptide reads, in one-letter code: Lipoyl synthase (325 aa).

Residues Cys71, Cys76, Cys82, Cys97, Cys101, Cys104, and Ser311 each coordinate [4Fe-4S] cluster. One can recognise a Radical SAM core domain in the interval 83-300; it reads FSGGTATFMI…ERQALAMGFT (218 aa).

Belongs to the radical SAM superfamily. Lipoyl synthase family. [4Fe-4S] cluster is required as a cofactor.

Its subcellular location is the cytoplasm. The catalysed reaction is [[Fe-S] cluster scaffold protein carrying a second [4Fe-4S](2+) cluster] + N(6)-octanoyl-L-lysyl-[protein] + 2 oxidized [2Fe-2S]-[ferredoxin] + 2 S-adenosyl-L-methionine + 4 H(+) = [[Fe-S] cluster scaffold protein] + N(6)-[(R)-dihydrolipoyl]-L-lysyl-[protein] + 4 Fe(3+) + 2 hydrogen sulfide + 2 5'-deoxyadenosine + 2 L-methionine + 2 reduced [2Fe-2S]-[ferredoxin]. It participates in protein modification; protein lipoylation via endogenous pathway; protein N(6)-(lipoyl)lysine from octanoyl-[acyl-carrier-protein]: step 2/2. Catalyzes the radical-mediated insertion of two sulfur atoms into the C-6 and C-8 positions of the octanoyl moiety bound to the lipoyl domains of lipoate-dependent enzymes, thereby converting the octanoylated domains into lipoylated derivatives. This Methylobacillus flagellatus (strain ATCC 51484 / DSM 6875 / VKM B-1610 / KT) protein is Lipoyl synthase.